A 586-amino-acid polypeptide reads, in one-letter code: Cytosolic Fe-S cluster assembly factor NAR1 (586 aa).

[4Fe-4S] cluster-binding residues include cysteine 20, cysteine 73, cysteine 76, cysteine 79, cysteine 220, cysteine 275, cysteine 462, and cysteine 466.

It belongs to the NARF family.

Component of the cytosolic Fe/S protein assembly machinery. Required for maturation of extramitochondrial Fe/S proteins. May play a role in the transfer of pre-assembled Fe/S clusters to target apoproteins. The chain is Cytosolic Fe-S cluster assembly factor NAR1 (NAR1) from Chaetomium globosum (strain ATCC 6205 / CBS 148.51 / DSM 1962 / NBRC 6347 / NRRL 1970) (Soil fungus).